Reading from the N-terminus, the 455-residue chain is Probable xyloglucan galactosyltransferase GT17 (455 aa).

At 1 to 34 (MTFNKRQVKINHWPEKNDKEKQKYSKNRETVKLT) the chain is on the cytoplasmic side. The chain crosses the membrane as a helical; Signal-anchor for type II membrane protein span at residues 35-55 (LLTLLLLCSICFLFLTLNFPF). Topologically, residues 56–455 (TIEFTASIPR…QARDNVVVSL (400 aa)) are lumenal. N-linked (GlcNAc...) asparagine glycosylation is found at Asn70, Asn169, Asn230, Asn390, and Asn426.

Belongs to the glycosyltransferase 47 family. As to expression, expressed in roots and hypocotyls.

The protein localises to the golgi apparatus membrane. Functions in xyloglucan synthesis by adding side chains to the xylosylated glucan backbone. Involved in the galactosylation of hemicellulose xyloglucan. This Arabidopsis thaliana (Mouse-ear cress) protein is Probable xyloglucan galactosyltransferase GT17.